We begin with the raw amino-acid sequence, 68 residues long: Large ribosomal subunit protein bL33c (68 aa).

The protein belongs to the bacterial ribosomal protein bL33 family.

Its subcellular location is the plastid. It localises to the chloroplast. This chain is Large ribosomal subunit protein bL33c, found in Amborella trichopoda.